Here is a 313-residue protein sequence, read N- to C-terminus: Porphobilinogen deaminase (313 aa).

C242 is modified (S-(dipyrrolylmethanemethyl)cysteine).

It belongs to the HMBS family. As to quaternary structure, monomer. It depends on dipyrromethane as a cofactor.

The catalysed reaction is 4 porphobilinogen + H2O = hydroxymethylbilane + 4 NH4(+). It participates in porphyrin-containing compound metabolism; protoporphyrin-IX biosynthesis; coproporphyrinogen-III from 5-aminolevulinate: step 2/4. Its function is as follows. Tetrapolymerization of the monopyrrole PBG into the hydroxymethylbilane pre-uroporphyrinogen in several discrete steps. This is Porphobilinogen deaminase from Yersinia pestis bv. Antiqua (strain Angola).